Consider the following 153-residue polypeptide: D-aminoacyl-tRNA deacylase (153 aa).

Positions 142-143 match the Gly-cisPro motif, important for rejection of L-amino acids motif; the sequence is GP.

The protein belongs to the DTD family. As to quaternary structure, homodimer.

Its subcellular location is the cytoplasm. The catalysed reaction is glycyl-tRNA(Ala) + H2O = tRNA(Ala) + glycine + H(+). It catalyses the reaction a D-aminoacyl-tRNA + H2O = a tRNA + a D-alpha-amino acid + H(+). An aminoacyl-tRNA editing enzyme that deacylates mischarged D-aminoacyl-tRNAs. Also deacylates mischarged glycyl-tRNA(Ala), protecting cells against glycine mischarging by AlaRS. Acts via tRNA-based rather than protein-based catalysis; rejects L-amino acids rather than detecting D-amino acids in the active site. By recycling D-aminoacyl-tRNA to D-amino acids and free tRNA molecules, this enzyme counteracts the toxicity associated with the formation of D-aminoacyl-tRNA entities in vivo and helps enforce protein L-homochirality. The polypeptide is D-aminoacyl-tRNA deacylase (Cupriavidus taiwanensis (strain DSM 17343 / BCRC 17206 / CCUG 44338 / CIP 107171 / LMG 19424 / R1) (Ralstonia taiwanensis (strain LMG 19424))).